Consider the following 215-residue polypeptide: MVKIKICGITRLSDALDACFAGADALGFNFSSKSPRAIAPERAKEIIEKLPPFVESTGIFVDQSPEEINALCQYCRLQIAQLHSEQYSPEQARSITAAKVIKVFRPEENFAVEEVFAFAQNSGINAFLFDAYRPGMAGGTGETIEASLATRIFNELGNSCYAILAGGLNATNVGEAIRRIQPYGVDTASGVESRPGIKDSREIRSFVKAVHHGGH.

This sequence belongs to the TrpF family.

It carries out the reaction N-(5-phospho-beta-D-ribosyl)anthranilate = 1-(2-carboxyphenylamino)-1-deoxy-D-ribulose 5-phosphate. Its pathway is amino-acid biosynthesis; L-tryptophan biosynthesis; L-tryptophan from chorismate: step 3/5. This is N-(5'-phosphoribosyl)anthranilate isomerase from Chlorobium phaeobacteroides (strain DSM 266 / SMG 266 / 2430).